Reading from the N-terminus, the 298-residue chain is Bifunctional protein FolD (298 aa).

Residues 165 to 167 (GRS), Ser-190, and Ile-231 each bind NADP(+).

The protein belongs to the tetrahydrofolate dehydrogenase/cyclohydrolase family. As to quaternary structure, homodimer.

The enzyme catalyses (6R)-5,10-methylene-5,6,7,8-tetrahydrofolate + NADP(+) = (6R)-5,10-methenyltetrahydrofolate + NADPH. The catalysed reaction is (6R)-5,10-methenyltetrahydrofolate + H2O = (6R)-10-formyltetrahydrofolate + H(+). The protein operates within one-carbon metabolism; tetrahydrofolate interconversion. Catalyzes the oxidation of 5,10-methylenetetrahydrofolate to 5,10-methenyltetrahydrofolate and then the hydrolysis of 5,10-methenyltetrahydrofolate to 10-formyltetrahydrofolate. The protein is Bifunctional protein FolD of Prochlorococcus marinus (strain MIT 9301).